The chain runs to 369 residues: Gap junction alpha-5 protein (369 aa).

At 2–19 (GDWSFLGEFLEEVHKHST) the chain is on the cytoplasmic side. A helical membrane pass occupies residues 20–40 (VVGKVWLTVLFIFRMLVLGTA). Topologically, residues 41–76 (AGPLWGDEQSDFMCDTQQPGCENVCYDKAFPISHVR) are extracellular. The chain crosses the membrane as a helical span at residues 77–97 (FWVLQIIFVSTPSLVYMGHAM). At 98–169 (HTVRMEEKRK…YSILIRTAME (72 aa)) the chain is on the cytoplasmic side. A helical membrane pass occupies residues 170-190 (IAFIVGQYILYGIFLETLYIC). The Extracellular segment spans residues 191–210 (QRAPCPHPVNCYVSRPTEKN). A helical transmembrane segment spans residues 211–231 (VFIIFMLAVAVLSLFLSLAEL). Over 232–369 (YHLGWKKAKE…SKARSDDLSV (138 aa)) the chain is Cytoplasmic. The tract at residues 347-369 (NEKRRFSKASRASSKARSDDLSV) is disordered.

Belongs to the connexin family. Alpha-type (group II) subfamily. In terms of assembly, a connexon is composed of a hexamer of connexins. In terms of tissue distribution, mostly in heart, and in the whole embryo, liver, stomach, and pectoral muscle.

The protein resides in the cell membrane. Its subcellular location is the cell junction. It is found in the gap junction. One gap junction consists of a cluster of closely packed pairs of transmembrane channels, the connexons, through which materials of low MW diffuse from one cell to a neighboring cell. This Gallus gallus (Chicken) protein is Gap junction alpha-5 protein (GJA5).